Here is a 2876-residue protein sequence, read N- to C-terminus: Nipped-B-like protein B (2876 aa).

Composition is skewed to polar residues over residues 124–142 (PQNSMHGSPASNYQQTTIT) and 149–167 (YVQTQAGSGSRYMPQQNSP). Disordered stretches follow at residues 124–197 (PQNS…PIQQ), 246–367 (NDEG…SDAE), 439–494 (RESA…AGNK), and 525–1017 (EGPV…FPNY). A compositionally biased stretch (pro residues) spans 276-290 (GPRPPLILQSPPPYT). Residues 439 to 457 (RESAIERERCSKEVQDKDK) are compositionally biased toward basic and acidic residues. The segment covering 471-480 (PGAAGTAGAS) has biased composition (low complexity). Gly residues predominate over residues 481-490 (GTPGVGGGCN). 3 stretches are compositionally biased toward basic and acidic residues: residues 556-577 (SKTDGEVQRTVDGRPEVIKQRV), 586-955 (VDGR…EQRS), and 962-1005 (VKQE…HKPQ). Positions 1068 to 1081 (NKGAKPVVVLKKLS) match the PxVxL motif motif. 2 disordered regions span residues 1088–1229 (MISN…EPKL) and 1724–1747 (TEKAMKSQRDDDSSDGPHHAKDVE). Low complexity predominate over residues 1090-1100 (SNSRSSKSSRS). Composition is skewed to basic and acidic residues over residues 1104–1119 (RFRETDSRLPLCERVK) and 1156–1183 (KDRDKTWEYEEKDRRGSGDHRRSFDSRR). Basic residues predominate over residues 1212 to 1223 (KLKKKEKQKKRK). HEAT repeat units lie at residues 1803–1841 (AQSFDIYLTQILRVLGESAIAVRTKAMKCLSEVVAVDPS), 1879–1917 (PQLTEQYYDMLIERILDTGISVRKRVIKILRDICLEQPT), 1981–2020 (YDWFEQLLQNLLKSEEDASYKPARKACAQLVDSLVEHILK), 2203–2241 (VVIKDKVLELLLYFTKNDDEEVQTKAIIGLGFLFIQDPG), and 2349–2387 (LIHPVQCVPYLIAMGTDSEPTMRNKADQQLVEIDKKYTG). Disordered regions lie at residues 2516–2590 (EVVK…DSDL) and 2728–2774 (ALLG…GHRN). Positions 2519–2537 (KKKKKKKKKKKQKQKRGKK) are enriched in basic residues. Positions 2548-2563 (RSSSSSSSSSSSSSDS) are enriched in low complexity. The segment covering 2762–2774 (RTGDSAEASGHRN) has biased composition (basic and acidic residues).

The protein belongs to the SCC2/Nipped-B family.

It is found in the nucleus. May play a structural role in chromatin. Involved in sister chromatid cohesion, possibly by facilitating the cohesin complex loading. Transcription factor, which may promote cortical neuron migration during brain development by regulating the transcription of crucial genes in this process. This Danio rerio (Zebrafish) protein is Nipped-B-like protein B (nipblb).